Reading from the N-terminus, the 527-residue chain is Ribosomal protein S6 kinase beta-1 (527 aa).

The tract at residues 1 to 54 (MRRRRRRDGFYPAPDFRDREAEDMAGVFDIDLDQPEDAGSEDELEEGGQLNESM) is disordered. The short motif at 28–32 (FDIDL) is the TOS motif element. Residues 30–46 (IDLDQPEDAGSEDELEE) show a composition bias toward acidic residues. A Protein kinase domain is found at 91–352 (FELLRVLGKG…AGEVQAHPFF (262 aa)). Residues 97-105 (LGKGGYGKV) and Lys123 contribute to the ATP site. Asp218 (proton acceptor) is an active-site residue. Thr252 carries the phosphothreonine; by PDPK1 modification. An AGC-kinase C-terminal domain is found at 353-423 (RHINWEELLA…VAPSVLESVK (71 aa)). Position 394 is a phosphoserine (Ser394). Thr412 carries the post-translational modification Phosphothreonine; by MTOR, NEK6 and NEK7. An autoinhibitory domain region spans residues 424–527 (EKFSFEPKIR…PEHLRMNLEL (104 aa)). Phosphoserine is present on residues Ser434 and Ser441. Residue Thr444 is modified to Phosphothreonine. Phosphoserine occurs at positions 447 and 452. An N6-acetyllysine modification is found at Lys516.

Belongs to the protein kinase superfamily. AGC Ser/Thr protein kinase family. S6 kinase subfamily. As to quaternary structure, interacts with PPP1R9A/neurabin-1. Interacts with RPTOR. Interacts with IRS1. Interacts with EIF3B and EIF3C. Interacts with TRAF4. Interacts with POLDIP3. Interacts (via N-terminus) with IER5. In terms of processing, phosphorylation at Thr-412 is regulated by mTORC1. The phosphorylation at this site is maintained by an agonist-dependent autophosphorylation mechanism. Activated by phosphorylation at Thr-252 by PDPK1. Dephosphorylation by PPP1CC at Thr-412 in mitochondrion.

It is found in the cytoplasm. It localises to the synapse. Its subcellular location is the synaptosome. The protein resides in the mitochondrion outer membrane. The protein localises to the mitochondrion. It catalyses the reaction L-seryl-[protein] + ATP = O-phospho-L-seryl-[protein] + ADP + H(+). It carries out the reaction L-threonyl-[protein] + ATP = O-phospho-L-threonyl-[protein] + ADP + H(+). Its activity is regulated as follows. Inactivated by binding to URI1. Activation requires multiple phosphorylation events on serine/threonine residues. Activation appears to be first mediated by phosphorylation of multiple sites in the autoinhibitory domain, which facilitates phosphorylation at Thr-412, disrupting the autoinhibitory mechanism and allowing phosphorylation of Thr-252 by PDPK1. The active conformation of the kinase is believed to be stabilized by a mechanism involving three conserved phosphorylation sites located in the kinase domain activation loop (Thr-252) and in the AGC-kinase C-terminal domain (Ser-394 in the middle of the tail/linker region and Thr-412 within a hydrophobic motif at its end). Activated by mTORC1; isoform Alpha I and isoform Alpha II are sensitive to rapamycin, which inhibits activating phosphorylation at Thr-412. Activated by PDPK1. In terms of biological role, serine/threonine-protein kinase that acts downstream of mTOR signaling in response to growth factors and nutrients to promote cell proliferation, cell growth and cell cycle progression. Regulates protein synthesis through phosphorylation of EIF4B, RPS6 and EEF2K, and contributes to cell survival by repressing the pro-apoptotic function of BAD. Under conditions of nutrient depletion, the inactive form associates with the EIF3 translation initiation complex. Upon mitogenic stimulation, phosphorylation by the mechanistic target of rapamycin complex 1 (mTORC1) leads to dissociation from the EIF3 complex and activation. The active form then phosphorylates and activates several substrates in the pre-initiation complex, including the EIF2B complex and the cap-binding complex component EIF4B. Also controls translation initiation by phosphorylating a negative regulator of EIF4A, PDCD4, targeting it for ubiquitination and subsequent proteolysis. Promotes initiation of the pioneer round of protein synthesis by phosphorylating POLDIP3/SKAR. In response to IGF1, activates translation elongation by phosphorylating EEF2 kinase (EEF2K), which leads to its inhibition and thus activation of EEF2. Also plays a role in feedback regulation of mTORC2 by mTORC1 by phosphorylating MAPKAP1/SIN1, MTOR and RICTOR, resulting in the inhibition of mTORC2 and AKT1 signaling. Also involved in feedback regulation of mTORC1 and mTORC2 by phosphorylating DEPTOR. Mediates cell survival by phosphorylating the pro-apoptotic protein BAD and suppressing its pro-apoptotic function. Phosphorylates mitochondrial URI1 leading to dissociation of a URI1-PPP1CC complex. The free mitochondrial PPP1CC can then dephosphorylate RPS6KB1 at Thr-412, which is proposed to be a negative feedback mechanism for the RPS6KB1 anti-apoptotic function. Mediates TNF-alpha-induced insulin resistance by phosphorylating IRS1 at multiple serine residues, resulting in accelerated degradation of IRS1. In cells lacking functional TSC1-2 complex, constitutively phosphorylates and inhibits GSK3B. May be involved in cytoskeletal rearrangement through binding to neurabin. Phosphorylates and activates the pyrimidine biosynthesis enzyme CAD, downstream of MTOR. Following activation by mTORC1, phosphorylates EPRS and thereby plays a key role in fatty acid uptake by adipocytes and also most probably in interferon-gamma-induced translation inhibition. This chain is Ribosomal protein S6 kinase beta-1 (RPS6KB1), found in Bos taurus (Bovine).